The sequence spans 466 residues: Asparagine--tRNA ligase (466 aa).

Belongs to the class-II aminoacyl-tRNA synthetase family. Homodimer.

It is found in the cytoplasm. The catalysed reaction is tRNA(Asn) + L-asparagine + ATP = L-asparaginyl-tRNA(Asn) + AMP + diphosphate + H(+). This chain is Asparagine--tRNA ligase, found in Sodalis glossinidius (strain morsitans).